The following is a 138-amino-acid chain: Basic phospholipase A2 Tbo-G6D49 (138 aa).

Residues 1–16 form the signal peptide; that stretch reads MRTLWIMAVLLVGVEG. 7 disulfide bridges follow: Cys42–Cys131, Cys44–Cys60, Cys59–Cys111, Cys65–Cys138, Cys66–Cys104, Cys73–Cys97, and Cys91–Cys102. The Ca(2+) site is built by Tyr43, Gly45, and Gly47. His63 is an active-site residue. Residue Asp64 coordinates Ca(2+). The active site involves Asp105.

In terms of assembly, monomer. Requires Ca(2+) as cofactor. Expressed by the venom gland.

The protein localises to the secreted. The catalysed reaction is a 1,2-diacyl-sn-glycero-3-phosphocholine + H2O = a 1-acyl-sn-glycero-3-phosphocholine + a fatty acid + H(+). In terms of biological role, snake venom phospholipase A2 (PLA2) that impairs hemostasis. It weakly inhibits ADP-induced platelet aggregation when tested on platelet rich plasma from human and rabbit blood (15-25% of inhibition at 5-10 ug of enzyme), and dose-dependently inhibits blood coagulation, possibly by inhibiting thrombin activation. Exhibits strong hydrolytic activities toward L-dipalmitoyl phosphatidylcholine. PLA2 catalyzes the calcium-dependent hydrolysis of the 2-acyl groups in 3-sn-phosphoglycerides. The chain is Basic phospholipase A2 Tbo-G6D49 from Craspedocephalus borneensis (Borneo pit viper).